The sequence spans 506 residues: H/ACA ribonucleoprotein complex subunit DKC1 (506 aa).

The tract at residues 1-26 (MADTESKKEKKRKSKKISDEEVGDIQ) is disordered. Aspartate 120 acts as the Nucleophile in catalysis. The PUA domain occupies 291–366 (HKRIVMKDSA…VVAKIKRVIM (76 aa)). Disordered stretches follow at residues 391-410 (GLLD…WKEG) and 419-506 (VKKG…ADSD). Residues 421–434 (KGGEASAKRKRDES) are compositionally biased toward basic and acidic residues. Over residues 457–466 (EKKKKKKEKK) the composition is skewed to basic residues.

This sequence belongs to the pseudouridine synthase TruB family. Part of the H/ACA small nucleolar ribonucleoprotein (H/ACA snoRNP) complex. The complex binds a box H/ACA small nucleolar RNA (snoRNA), which may target the specific site of modification within the RNA substrate.

Its subcellular location is the nucleus. The protein localises to the nucleolus. The protein resides in the cajal body. The catalysed reaction is uridine in 5S rRNA = pseudouridine in 5S rRNA. In terms of biological role, catalytic subunit of H/ACA small nucleolar ribonucleoprotein (H/ACA snoRNP) complex, which catalyzes pseudouridylation of rRNA. This involves the isomerization of uridine such that the ribose is subsequently attached to C5, instead of the normal N1. Pseudouridine ('psi') residues may serve to stabilize the conformation of rRNAs. Required for ribosome biogenesis and telomere maintenance. The chain is H/ACA ribonucleoprotein complex subunit DKC1 from Danio rerio (Zebrafish).